The primary structure comprises 210 residues: Heart- and neural crest derivatives-expressed protein 2 (210 aa).

The segment at 81–101 (SGAGGLMQRPVKRRGTANRKE) is disordered. Positions 90–101 (PVKRRGTANRKE) are enriched in basic residues. Residues 92-144 (KRRGTANRKERRRTISINSAFAELRECIPNVPADTKLSKIKTLRLATSYIAYL) form the bHLH domain.

As to quaternary structure, efficient DNA binding requires dimerization with another bHLH protein. As to expression, heart, liver and spleen.

The protein resides in the nucleus. Its function is as follows. Essential for cardiac morphogenesis and for the development of branchial arches. Binds DNA on E-box consensus sequence 5'-CANNTG-3'. The sequence is that of Heart- and neural crest derivatives-expressed protein 2 (hand2) from Xenopus laevis (African clawed frog).